The following is a 290-amino-acid chain: ATP synthase gamma chain (290 aa).

The protein belongs to the ATPase gamma chain family. As to quaternary structure, F-type ATPases have 2 components, CF(1) - the catalytic core - and CF(0) - the membrane proton channel. CF(1) has five subunits: alpha(3), beta(3), gamma(1), delta(1), epsilon(1). CF(0) has three main subunits: a, b and c.

The protein localises to the cell inner membrane. Produces ATP from ADP in the presence of a proton gradient across the membrane. The gamma chain is believed to be important in regulating ATPase activity and the flow of protons through the CF(0) complex. The protein is ATP synthase gamma chain of Anaeromyxobacter sp. (strain Fw109-5).